A 508-amino-acid polypeptide reads, in one-letter code: Protection of telomeres protein tpz1 (508 aa).

Residues 2 to 223 are pot1-binding; sequence SNCLKHPWLE…ENTTHGIYLE (222 aa). Disordered stretches follow at residues 159-178, 235-269, and 282-358; these read QEAS…NSRD, VSET…PSLP, and PPPF…QSHR. The span at 327–347 shows a compositional bias: polar residues; that stretch reads STEQLNSSLTIERSQSIQSTD. Residues 348-358 show a composition bias toward basic and acidic residues; sequence SKQRVETQSHR. Positions 379-508 are ccq1/poz1-binding; that stretch reads TIDDSTGKLL…KKIEEFRNKS (130 aa).

In terms of assembly, interacts with ccq1, pot1 and poz1.

It is found in the chromosome. The protein localises to the telomere. The protein resides in the nucleus. In terms of biological role, telomeric DNA-binding protein that is required to protect the 3'-end telomeric overhang and involved in telomere length regulation. recruits poz1 and ccq1 to telomeres, regulating telomere length negatively and positively respectively. The protein is Protection of telomeres protein tpz1 (tpz1) of Schizosaccharomyces pombe (strain 972 / ATCC 24843) (Fission yeast).